The chain runs to 190 residues: Ladderlectin (190 aa).

An N-terminal signal peptide occupies residues 1–18; sequence MAMLTISLLLCAAVALNG. The C-type lectin domain occupies 60–179; sequence GSRCFMFVET…GNSFPSGVLQ (120 aa). Cys153 and Cys169 are joined by a disulfide.

In terms of assembly, multimeric. As to expression, expressed in cells of the branchial epithelium, hepatic sinusoids, biliary epithelium, renal interstitium, skin, and sub-mucosal granular layer of the intestine. Highly expressed in caudal kidney. Moderately expressed in liver. Weakly expressed in gill, spleen, cranial kidney and skin. Isoform 1 is highly expressed in intestine. Isoform 2 is weakly expressed in intestine.

Functionally, lectin that binds sepharose in a calcium-dependent manner. The sequence is that of Ladderlectin from Oncorhynchus mykiss (Rainbow trout).